Here is a 133-residue protein sequence, read N- to C-terminus: Ribonuclease VapC29 (133 aa).

Residues valine 3–histidine 122 form the PINc domain. Mg(2+) is bound by residues aspartate 6 and aspartate 97.

It belongs to the PINc/VapC protein family. It depends on Mg(2+) as a cofactor.

Functionally, toxic component of a type II toxin-antitoxin (TA) system. Its cognate antitoxin is VapB29. Has ribonuclease activity. The polypeptide is Ribonuclease VapC29 (Mycobacterium tuberculosis (strain CDC 1551 / Oshkosh)).